Consider the following 92-residue polypeptide: C-C motif chemokine 3 (92 aa).

The N-terminal stretch at 1 to 23 (MQVSTAALAVLLCTMALCNQFSA) is a signal peptide. 2 cysteine pairs are disulfide-bonded: Cys33–Cys57 and Cys34–Cys73.

It belongs to the intercrine beta (chemokine CC) family. Self-associates. Also heterodimer of MIP-1-alpha(4-69) and MIP-1-beta(3-69). Interacts with CCR1.

Its subcellular location is the secreted. Functionally, monokine with inflammatory and chemokinetic properties. Binds to CCR1, CCR4 and CCR5. One of the major HIV-suppressive factors produced by CD8+ T-cells. Recombinant MIP-1-alpha induces a dose-dependent inhibition of different strains of HIV-1, HIV-2, and simian immunodeficiency virus (SIV). The polypeptide is C-C motif chemokine 3 (CCL3) (Pan troglodytes (Chimpanzee)).